Consider the following 465-residue polypeptide: tRNA modification GTPase MnmE (465 aa).

Positions 21, 85, and 124 each coordinate (6S)-5-formyl-5,6,7,8-tetrahydrofolate. Residues 220–387 (GVPVAIIGET…LQQRLVAAAH (168 aa)) enclose the TrmE-type G domain. Asn-230 lines the K(+) pocket. GTP-binding positions include 230 to 235 (NAGKST), 249 to 255 (SDIHGTT), and 274 to 277 (DTAG). Residue Ser-234 participates in Mg(2+) binding. K(+) is bound by residues Ser-249, Ile-251, and Thr-254. Thr-255 provides a ligand contact to Mg(2+). Lys-465 lines the (6S)-5-formyl-5,6,7,8-tetrahydrofolate pocket.

It belongs to the TRAFAC class TrmE-Era-EngA-EngB-Septin-like GTPase superfamily. TrmE GTPase family. Homodimer. Heterotetramer of two MnmE and two MnmG subunits. K(+) is required as a cofactor.

It localises to the cytoplasm. Functionally, exhibits a very high intrinsic GTPase hydrolysis rate. Involved in the addition of a carboxymethylaminomethyl (cmnm) group at the wobble position (U34) of certain tRNAs, forming tRNA-cmnm(5)s(2)U34. The polypeptide is tRNA modification GTPase MnmE (Bacteroides fragilis (strain ATCC 25285 / DSM 2151 / CCUG 4856 / JCM 11019 / LMG 10263 / NCTC 9343 / Onslow / VPI 2553 / EN-2)).